A 212-amino-acid chain; its full sequence is Ion-translocating oxidoreductase complex subunit G (212 aa).

The helical transmembrane segment at 9–29 (ASLLGLFALLCTALVALVNQF) threads the bilayer. Thr-176 carries the FMN phosphoryl threonine modification.

This sequence belongs to the RnfG family. The complex is composed of six subunits: RnfA, RnfB, RnfC, RnfD, RnfE and RnfG. FMN is required as a cofactor.

Its subcellular location is the cell inner membrane. Its function is as follows. Part of a membrane-bound complex that couples electron transfer with translocation of ions across the membrane. The chain is Ion-translocating oxidoreductase complex subunit G from Shewanella loihica (strain ATCC BAA-1088 / PV-4).